We begin with the raw amino-acid sequence, 436 residues long: DNA-dependent metalloprotease SPRTN (436 aa).

Positions 19–186 constitute a SprT-like domain; that stretch reads IRALFLEFND…RTCGGEFVKI (168 aa). Position 85 (His-85) interacts with Zn(2+). Residue Glu-86 is part of the active site. Zn(2+) is bound by residues His-89 and His-104. The interval 184–219 is disordered; sequence VKIKEPENYSQKRKRNNDPTKSELGNSSHVKINKGK. Residues 231-239 carry the SHP-box motif; sequence FSGTGYKLF. The PIP-box signature appears at 271 to 277; that stretch reads QTDSTFL. The interval 300-321 is disordered; it reads GSPIKLPSSSNNKSHQDSSKQK. Residues 408–435 form a UBZ4-type zinc finger; that stretch reads KVCCPVCGTEIFESKINDHLDTCLQNYN. Cys-411, Cys-414, His-426, and Cys-430 together coordinate Zn(2+).

Belongs to the Spartan family. As to quaternary structure, homodimer. Zn(2+) is required as a cofactor. Post-translationally, autocatalytically cleaved in response to double-stranded DNA-binding: autocatalytic cleavage takes place in trans and leads to inactivation.

The protein resides in the nucleus. Its subcellular location is the chromosome. With respect to regulation, DNA-binding activates the protease activity: single-stranded DNA-binding specifically activates ability to cleave covalent DNA-protein cross-links (DPCs). In contrast, double-stranded DNA-binding specifically activates autocatalytic cleavage, and subsequent inactivation. In terms of biological role, DNA-dependent metalloendopeptidase that mediates the proteolytic cleavage of covalent DNA-protein cross-links (DPCs) during DNA synthesis, thereby playing a key role in maintaining genomic integrity. DPCs are highly toxic DNA lesions that interfere with essential chromatin transactions, such as replication and transcription, and which are induced by reactive agents, such as UV light or formaldehyde. Associates with the DNA replication machinery and specifically removes DPCs during DNA synthesis. Catalyzes proteolytic cleavage of the hmces DNA-protein cross-link following unfolding by the brip1/fancj helicase. Acts as a pleiotropic protease for DNA-binding proteins cross-linked with DNA, such as top1, top2a, histones H3 and H4. Mediates degradation of DPCs that are not ubiquitinated, while it is not able to degrade ubiquitinated DPCs. SPRTN activation requires polymerase collision with DPCs followed by helicase bypass of DPCs. May also act as a 'reader' of ubiquitinated pcna: facilitates chromatin association of rad18 and is required for efficient pcna monoubiquitination, promoting a feed-forward loop to enhance pcna ubiquitination and translesion DNA synthesis. Acts as a regulator of translesion DNA synthesis by recruiting vcp/p97 to sites of DNA damage. The chain is DNA-dependent metalloprotease SPRTN from Xenopus tropicalis (Western clawed frog).